We begin with the raw amino-acid sequence, 574 residues long: Sulfate adenylyltransferase (574 aa).

The segment at 1–169 (MANTPHGGVL…LEAVNKLNHY (169 aa)) is N-terminal. Positions 170–394 (DYVGLRYTPA…LRESSPPRAL (225 aa)) are catalytic. Glutamine 197 lines the sulfate pocket. ATP is bound by residues 197–200 (QTRN) and 291–294 (GRDH). Active-site residues include threonine 198, arginine 199, and asparagine 200. Sulfate is bound at residue arginine 199. Alanine 295 is a sulfate binding site. Valine 333 contributes to the ATP binding site. The tract at residues 395–574 (QGFTIFLTGY…LESEGYFERL (180 aa)) is allosteric regulation domain; adenylyl-sulfate kinase-like. 3'-phosphoadenylyl sulfate-binding positions include 434–437 (DTVR), arginine 451, 477–478 (IA), and arginine 516.

This sequence in the N-terminal section; belongs to the sulfate adenylyltransferase family. In the C-terminal section; belongs to the APS kinase family. In terms of assembly, homohexamer. Dimer of trimers.

Its subcellular location is the cytoplasm. The enzyme catalyses sulfate + ATP + H(+) = adenosine 5'-phosphosulfate + diphosphate. Its pathway is sulfur metabolism; hydrogen sulfide biosynthesis; sulfite from sulfate: step 1/3. Its activity is regulated as follows. Allosterically inhibited by 3'-phosphoadenosine 5'-phosphosulfate (PAPS). Its function is as follows. Catalyzes the first intracellular reaction of sulfate assimilation, forming adenosine-5'-phosphosulfate (APS) from inorganic sulfate and ATP. Plays an important role in sulfate activation as a component of the biosynthesis pathway of sulfur-containing amino acids. This Emericella nidulans (strain FGSC A4 / ATCC 38163 / CBS 112.46 / NRRL 194 / M139) (Aspergillus nidulans) protein is Sulfate adenylyltransferase.